Reading from the N-terminus, the 1034-residue chain is MYKKIDNNKSFVQMEKDILKLWQDRKVVEKSFNSNKDGEYFTFYDGPPTANGKPHIGHVLTRVIKDLIPRYKVMKGYKVLRKAGWDTHGLPVELEVEKSLGISGKPQIEKYGVEDFIKKCKDSVFTYVSQWRKMSDRIGFWVDMDDPYVTYDNHYIESEWWALKQIWDKNLLYKGHKIVPYCPRCGTALSSHEVSQGYKDVKETSVYVKFKIKNEDKYILAWTTTPWTLPNNMALTINKSYDYVEVINDGEHLILAEGLLEKLEGEYEVVKKFKGEEMLGIEYEPMFNFTPFEGKAHYVVHGDYVTLTDGTGIVHTAPAFGEDDSITCIKHNIPMINSVTTQGKFKDEVTPWKGLFVKDADPKIIAYLKEKDILYKAEKFTHSYPFCWRCDTTLLYYPRDTWFIRMSAMRDKLIRNTNDTNWYPDNIRTGRFGKFVEGVIDWGLSRERYWGTPLPIWECECGHRECIGSIKELREKGINVPDDIELHKPYIDGVKLKCDKCHKEMERVPEVIDCWFDSGSMPFAQHHYPFENRELFEKNFPAQFISEAVDQTRGWFYTLMAISTVLFDKSSFENCLVLGHVLDKHGLKMSKHKGNVLSPEVVLENEGADATRWYFYTESAPWLPSRFYEEAVQDSQRKFLGTLWNVYSFYVLYADLDKFNPLEYSHFVSENVMDKWVISRLNSLIKITEGNLDNYRITQAAESIGNFVDELSNWYVRRNRTRFWNEELAEDKVGAYVTLYNVLNKLCLIAAPFVPFMTEEIYQNLVLSLNKNVPESIHLCKWPEYDLNLVDSDLEKNMEECYKIVKLGRSARNAANIKNRQPLSEMLISVKTLPGYYGDIIKSELNIKNIVFNADLSKYVNFNIKPNLPVLGKKYGRMIPKIKQSISSMNQMDLAGKINNNEVVKIKIDETEIELNSENLLITMEGLEGFAFAGEGSTGIVLETTITEELKEEGNLREILSKIQNMRKESGFEVADKIKLYVSDNEKLEEVVKKFEAQIKKETLAVEVAYNENREYSGCNINGEKFNIAVEVLK.

Positions 48–58 (PTANGKPHIGH) match the 'HIGH' region motif. The short motif at 588–592 (KMSKH) is the 'KMSKS' region element. Residue Lys-591 coordinates ATP.

It belongs to the class-I aminoacyl-tRNA synthetase family. IleS type 2 subfamily. As to quaternary structure, monomer. The cofactor is Zn(2+).

The protein localises to the cytoplasm. The enzyme catalyses tRNA(Ile) + L-isoleucine + ATP = L-isoleucyl-tRNA(Ile) + AMP + diphosphate. Its function is as follows. Catalyzes the attachment of isoleucine to tRNA(Ile). As IleRS can inadvertently accommodate and process structurally similar amino acids such as valine, to avoid such errors it has two additional distinct tRNA(Ile)-dependent editing activities. One activity is designated as 'pretransfer' editing and involves the hydrolysis of activated Val-AMP. The other activity is designated 'posttransfer' editing and involves deacylation of mischarged Val-tRNA(Ile). In Clostridium kluyveri (strain ATCC 8527 / DSM 555 / NBRC 12016 / NCIMB 10680 / K1), this protein is Isoleucine--tRNA ligase.